A 785-amino-acid chain; its full sequence is Protein PHTF2 (785 aa).

One can recognise a PHTF domain in the interval 46–191; it reads IQCLIGAYDQ…VHCQIVSTRT (146 aa). A run of 2 helical transmembrane segments spans residues 136–156 and 164–184; these read VIFFWLLVLYLLQVAAIVLFC and IPLTEVIGPIWLMLLLGTVHC. Disordered regions lie at residues 190–239 and 304–401; these read RTPK…GTST and RPEE…PESE. The span at 200–209 shows a compositional bias: basic residues; the sequence is GKRRRKLRKA. Positions 210–219 are enriched in basic and acidic residues; that stretch reads AHLEVHREGD. Composition is skewed to polar residues over residues 220–239 and 309–333; these read GSSTTDNTQEGAVQNHGTST and AWNTGTLRNGPSKDTQRTITNVSDE. An N-linked (GlcNAc...) asparagine glycan is attached at Asn-329. A compositionally biased stretch (basic residues) spans 359–369; the sequence is RNRKSHHYKKH. Residues 378–390 show a composition bias toward low complexity; it reads SGTSCSSRCSSSR. Positions 391 to 400 are enriched in basic and acidic residues; sequence QDSESARPES. A run of 4 helical transmembrane segments spans residues 497-517, 553-573, 634-654, and 668-688; these read IGYQIFGNAVSLILGLTPFVF, VIISFVVRVSLVWIFFFLLCV, VIVSSAFLLTISVVFICCAQL, and WELVIWCISLTLFLLRFVTLG. N-linked (GlcNAc...) asparagine glycosylation is found at Asn-697 and Asn-756. The chain crosses the membrane as a helical span at residues 760–780; that stretch reads VVILSAVSGVISDLLGFNLKL.

The protein resides in the membrane. This is Protein PHTF2 (PHTF2) from Homo sapiens (Human).